Consider the following 861-residue polypeptide: Leucine--tRNA ligase (861 aa).

The 'HIGH' region motif lies at 42 to 52 (PYPSGRLHMGH). The short motif at 619-623 (KMSKS) is the 'KMSKS' region element. Residue Lys-622 participates in ATP binding.

It belongs to the class-I aminoacyl-tRNA synthetase family.

The protein resides in the cytoplasm. It catalyses the reaction tRNA(Leu) + L-leucine + ATP = L-leucyl-tRNA(Leu) + AMP + diphosphate. This Haemophilus influenzae (strain 86-028NP) protein is Leucine--tRNA ligase.